The primary structure comprises 330 residues: Tryptophan--tRNA ligase (330 aa).

Residues 10–12 (QAT) and 18–19 (GN) each bind ATP. The 'HIGH' region signature appears at 11–19 (ATGSLHLGN). Asp134 contributes to the L-tryptophan binding site. Residues 146-148 (GED), Ile186, and 195-199 (KMSKS) contribute to the ATP site. The 'KMSKS' region signature appears at 195–199 (KMSKS).

This sequence belongs to the class-I aminoacyl-tRNA synthetase family. As to quaternary structure, homodimer.

Its subcellular location is the cytoplasm. The catalysed reaction is tRNA(Trp) + L-tryptophan + ATP = L-tryptophyl-tRNA(Trp) + AMP + diphosphate + H(+). Its function is as follows. Catalyzes the attachment of tryptophan to tRNA(Trp). This is Tryptophan--tRNA ligase from Rickettsia conorii (strain ATCC VR-613 / Malish 7).